A 319-amino-acid polypeptide reads, in one-letter code: Beta-ketoacyl-[acyl-carrier-protein] synthase III (319 aa).

Residues Cys115 and His246 contribute to the active site. The tract at residues Gln247–Arg251 is ACP-binding. Asn276 is a catalytic residue.

Belongs to the thiolase-like superfamily. FabH family. As to quaternary structure, homodimer.

Its subcellular location is the cytoplasm. It catalyses the reaction malonyl-[ACP] + acetyl-CoA + H(+) = 3-oxobutanoyl-[ACP] + CO2 + CoA. Its pathway is lipid metabolism; fatty acid biosynthesis. Catalyzes the condensation reaction of fatty acid synthesis by the addition to an acyl acceptor of two carbons from malonyl-ACP. Catalyzes the first condensation reaction which initiates fatty acid synthesis and may therefore play a role in governing the total rate of fatty acid production. Possesses both acetoacetyl-ACP synthase and acetyl transacylase activities. Its substrate specificity determines the biosynthesis of branched-chain and/or straight-chain of fatty acids. This is Beta-ketoacyl-[acyl-carrier-protein] synthase III from Coxiella burnetii (strain CbuK_Q154) (Coxiella burnetii (strain Q154)).